The following is a 473-amino-acid chain: 1-deoxy-D-xylulose 5-phosphate reductoisomerase, chloroplastic (473 aa).

The transit peptide at 1 to 49 directs the protein to the chloroplast; sequence MALKVVSFPGDLAAVSFLDSNRGGAFNQLKVDLPFQTRDRRAVSLRRTC. Residues T85, G86, S87, I88, G111, N113, and N199 each coordinate NADPH. K200 contributes to the 1-deoxy-D-xylulose 5-phosphate binding site. E201 lines the NADPH pocket. Position 225 (D225) interacts with Mn(2+). The 1-deoxy-D-xylulose 5-phosphate site is built by S226, E227, S251, and H274. Residue E227 coordinates Mn(2+). An NADPH-binding site is contributed by G280. 1-deoxy-D-xylulose 5-phosphate contacts are provided by S287, N292, K293, and E296. E296 provides a ligand contact to Mn(2+).

Belongs to the DXR family. Mn(2+) is required as a cofactor. Requires Mg(2+) as cofactor.

The protein resides in the plastid. The protein localises to the chloroplast stroma. The enzyme catalyses 2-C-methyl-D-erythritol 4-phosphate + NADP(+) = 1-deoxy-D-xylulose 5-phosphate + NADPH + H(+). The protein operates within isoprenoid biosynthesis; isopentenyl diphosphate biosynthesis via DXP pathway; isopentenyl diphosphate from 1-deoxy-D-xylulose 5-phosphate: step 1/6. Its function is as follows. Enzyme of the plastid non-mevalonate pathway for isoprenoid biosynthesis that catalyzes the NADPH-dependent rearrangement and reduction of 1-deoxy-D-xylulose-5-phosphate (DXP) to 2-C-methyl-D-erythritol 4-phosphate (MEP). Required for chloroplast development. The chain is 1-deoxy-D-xylulose 5-phosphate reductoisomerase, chloroplastic (DXR) from Oryza sativa subsp. japonica (Rice).